The following is a 1140-amino-acid chain: Protein FAM184A (1140 aa).

3 coiled-coil regions span residues 57–256, 296–800, and 868–907; these read ALNT…NKAQ, AILR…IEME, and RITD…LEFK. The segment at 1063–1128 is disordered; that stretch reads PNLSALESGG…EASPVASPDP (66 aa).

Belongs to the FAM184 family.

It localises to the cytoplasm. The protein resides in the P-body. The protein localises to the cytoskeleton. It is found in the microtubule organizing center. Its subcellular location is the centrosome. It localises to the centriolar satellite. The protein is Protein FAM184A of Homo sapiens (Human).